A 291-amino-acid chain; its full sequence is Lys-63-specific deubiquitinase BRCC36 (291 aa).

An N-acetylalanine modification is found at Ala2. Residues 12 to 179 (VHLESDAFLV…YTCFQSVQAQ (168 aa)) enclose the MPN domain. 3 residues coordinate Zn(2+): His122, His124, and Asp135. The JAMM motif signature appears at 122-135 (HSHPHITVWPSHVD). Residue Ser233 is modified to Phosphoserine.

Belongs to the peptidase M67A family. BRCC36 subfamily. Component of the ARISC complex, at least composed of UIMC1/RAP80, ABRAXAS1, BRCC3/BRCC36, BABAM2 and BABAM1/NBA1. Component of the BRCA1-A complex, at least composed of BRCA1, BARD1, UIMC1/RAP80, ABRAXAS1, BRCC3/BRCC36, BABAM2 and BABAM1/NBA1. In the BRCA1-A complex, interacts directly with ABRAXAS1 and BABAM2. Component of the BRISC complex, at least composed of ABRAXAS2, BRCC3/BRCC36, BABAM2 and BABAM1/NBA1. Identified in a complex with SHMT2 and the other subunits of the BRISC complex. In the BRISC complex, interacts directly with ABRAXAS2. Identified in a complex with ABRAXAS2 and NUMA1. The BRISC complex interacts with the CSN complex. Component of the BRCA1/BRCA2 containing complex (BRCC), which also contains BRCA1, BRCA2, BARD1, BABAM2 and RAD51. BRCC is a ubiquitin E3 ligase complex that enhances cellular survival following DNA damage. Interacts with BRCA1. Binds polyubiquitin. Interacts with PWWP2B. Interacts with HDAC1; this interaction is enhanced in the presence of PWWP2B. The cofactor is Zn(2+).

It localises to the nucleus. The protein localises to the cytoplasm. It is found in the cytoskeleton. The protein resides in the spindle pole. Metalloprotease that specifically cleaves 'Lys-63'-linked polyubiquitin chains. Does not have activity toward 'Lys-48'-linked polyubiquitin chains. Component of the BRCA1-A complex, a complex that specifically recognizes 'Lys-63'-linked ubiquitinated histones H2A and H2AX at DNA lesions sites, leading to target the BRCA1-BARD1 heterodimer to sites of DNA damage at double-strand breaks (DSBs). In the BRCA1-A complex, it specifically removes 'Lys-63'-linked ubiquitin on histones H2A and H2AX, antagonizing the RNF8-dependent ubiquitination at double-strand breaks (DSBs). Catalytic subunit of the BRISC complex, a multiprotein complex that specifically cleaves 'Lys-63'-linked ubiquitin in various substrates. Mediates the specific 'Lys-63'-specific deubiquitination associated with the COP9 signalosome complex (CSN), via the interaction of the BRISC complex with the CSN complex. The BRISC complex is required for normal mitotic spindle assembly and microtubule attachment to kinetochores via its role in deubiquitinating NUMA1. Plays a role in interferon signaling via its role in the deubiquitination of the interferon receptor IFNAR1; deubiquitination increases IFNAR1 activity by enhancing its stability and cell surface expression. Acts as a regulator of the NLRP3 inflammasome by mediating deubiquitination of NLRP3, leading to NLRP3 inflammasome assembly. Down-regulates the response to bacterial lipopolysaccharide (LPS) via its role in IFNAR1 deubiquitination. Deubiquitinates HDAC1 and PWWP2B leading to their stabilization. The chain is Lys-63-specific deubiquitinase BRCC36 (Brcc3) from Rattus norvegicus (Rat).